The following is a 213-amino-acid chain: Ras-related protein Rab-25 (213 aa).

Ser21, Gly24, Lys25, Thr26, Asn27, Ser38, His39, Thr43, and Thr44 together coordinate GTP. A Mg(2+)-binding site is contributed by Thr26. 2 consecutive short sequence motifs (switch) follow at residues Asn35–Phe49 and Asp67–Gly84. Residues Thr44 and Asp67 each contribute to the Mg(2+) site. The GTP site is built by Gly70, Asn125, Lys126, Asp128, Ala156, and Leu157. Residues Cys209 and Cys210 are each lipidated (S-geranylgeranyl cysteine). At Cys210 the chain carries Cysteine methyl ester. The propeptide at Ile211–Leu213 is removed in mature form.

This sequence belongs to the small GTPase superfamily. Rab family. Interacts (GTP-bound form) with RAB11FIP1, RAB11FIP2, RAB11FIP3 and RAB11FIP4. Interacts (via the hypervariable C-terminal region) with ITGB1 (via the cytoplasmic region); the interaction is GTP-dependent. Interacts with ITGAV. Associates with the integrin alpha-V/beta-1 heterodimer. Interacts with VPS33B. Requires Mg(2+) as cofactor. In terms of tissue distribution, expression is restricted to epithelial cells. Expressed in the gastrointestinal mucosa, (highest expression seen in the ileum and colon), kidney, and lung. A very minor and variable level of expression is seen in the splenic tissue.

The protein localises to the cell membrane. It localises to the cell projection. The protein resides in the pseudopodium membrane. It is found in the cytoplasmic vesicle. It catalyses the reaction GTP + H2O = GDP + phosphate + H(+). Regulated by guanine nucleotide exchange factors (GEFs) which promote the exchange of bound GDP for free GTP. Regulated by GTPase activating proteins (GAPs) which increase the GTP hydrolysis activity. Inhibited by GDP dissociation inhibitors (GDIs) which prevent Rab-GDP dissociation. In terms of biological role, the small GTPases Rab are key regulators of intracellular membrane trafficking, from the formation of transport vesicles to their fusion with membranes. Rabs cycle between an inactive GDP-bound form and an active GTP-bound form that is able to recruit to membranes different set of downstream effectors directly responsible for vesicle formation, movement, tethering and fusion. RAB25 regulates epithelial cell differentiation, proliferation and survival, thereby playing key roles in tumorigenesis. Promotes invasive migration of cells in which it functions to localize and maintain integrin alpha-V/beta-1 at the tips of extending pseudopodia. Involved in the regulation of epithelial morphogenesis through the control of CLDN4 expression and localization at tight junctions. May selectively regulate the apical recycling pathway. Together with MYO5B regulates transcytosis. The polypeptide is Ras-related protein Rab-25 (RAB25) (Oryctolagus cuniculus (Rabbit)).